The primary structure comprises 264 residues: Tryptophan synthase alpha chain (264 aa).

Active-site proton acceptor residues include Glu-49 and Asp-60.

This sequence belongs to the TrpA family. In terms of assembly, tetramer of two alpha and two beta chains.

It carries out the reaction (1S,2R)-1-C-(indol-3-yl)glycerol 3-phosphate + L-serine = D-glyceraldehyde 3-phosphate + L-tryptophan + H2O. Its pathway is amino-acid biosynthesis; L-tryptophan biosynthesis; L-tryptophan from chorismate: step 5/5. In terms of biological role, the alpha subunit is responsible for the aldol cleavage of indoleglycerol phosphate to indole and glyceraldehyde 3-phosphate. This chain is Tryptophan synthase alpha chain, found in Synechocystis sp. (strain ATCC 27184 / PCC 6803 / Kazusa).